We begin with the raw amino-acid sequence, 612 residues long: DNA mismatch repair protein MutL (612 aa).

This sequence belongs to the DNA mismatch repair MutL/HexB family.

In terms of biological role, this protein is involved in the repair of mismatches in DNA. It is required for dam-dependent methyl-directed DNA mismatch repair. May act as a 'molecular matchmaker', a protein that promotes the formation of a stable complex between two or more DNA-binding proteins in an ATP-dependent manner without itself being part of a final effector complex. The protein is DNA mismatch repair protein MutL of Afipia carboxidovorans (strain ATCC 49405 / DSM 1227 / KCTC 32145 / OM5) (Oligotropha carboxidovorans).